Here is a 559-residue protein sequence, read N- to C-terminus: Serine/threonine-protein kinase VRK1 (559 aa).

The region spanning 32–388 is the Protein kinase domain; the sequence is YIVGKQFATG…EDDDEEEEVI (357 aa). Residues 38–46 and K61 each bind ATP; that span reads FATGGFGRI. Residue D167 is the Proton acceptor of the active site. Disordered stretches follow at residues 315 to 419 and 448 to 559; these read EAAQ…ATSD and SSCE…SSEV. 2 stretches are compositionally biased toward polar residues: residues 405-418 and 449-460; these read RSFN…TATS and SCESQYESNEPG. Residues 533–542 are compositionally biased toward basic and acidic residues; the sequence is TSARYQEKRA. The span at 545–559 shows a compositional bias: polar residues; sequence NTKPTFDDSSCSSEV.

It belongs to the protein kinase superfamily. CK1 Ser/Thr protein kinase family. VRK subfamily. Post-translationally, autophosphorylates in vitro.

It localises to the nucleus. It is found in the cytoplasm. The protein resides in the cajal body. It catalyses the reaction L-seryl-[protein] + ATP = O-phospho-L-seryl-[protein] + ADP + H(+). It carries out the reaction L-threonyl-[protein] + ATP = O-phospho-L-threonyl-[protein] + ADP + H(+). Functionally, serine/threonine kinase that phosphorylates baf-1, thus regulating the association of baf-1 with chromatin and nuclear membrane proteins during nuclear envelope formation. May act through the egl-17 signaling pathway. Essential in hermaphrodites for formation of the vulva, uterus, and uterine seam cells and for development and maintenance of the somatic gonad and thus the germ line. Acts to prevent cep-1 from triggering an inappropriate cell cycle arrest, thereby promoting germ cell proliferation. Regulates anchor cell polarity and the timing of anchor cell invasion through the basement membranes separating vulval and somatic gonadal cells during the L3 larval stage. The protein is Serine/threonine-protein kinase VRK1 of Caenorhabditis briggsae.